The following is a 37-amino-acid chain: Large ribosomal subunit protein bL36c (37 aa).

This sequence belongs to the bacterial ribosomal protein bL36 family.

It is found in the plastid. Its subcellular location is the chloroplast. This chain is Large ribosomal subunit protein bL36c, found in Psilotum nudum (Whisk fern).